The following is a 222-amino-acid chain: MELTLHEARVIGCLLEKEVTTPEQYPLSLNALTLACNQKTSRDPVLDLSEALVQDALDSLNKKRLISEQSGFGSRVVKYKHRFCNTEFSELQLSSAAVAIICLLLLRGPQTPGELRTRSNRLHDFKDVLEVEACIKQLMERDKPVLAQLPREPGKRECRYAELFSQGAEQINAASLSADSPSAGSNSLNAQDRQQLEARVTQLEEQVAELKDKLDSLIASLS.

The segment covering 175–193 (SLSADSPSAGSNSLNAQDR) has biased composition (polar residues). The segment at 175–194 (SLSADSPSAGSNSLNAQDRQ) is disordered.

It belongs to the UPF0502 family.

The sequence is that of UPF0502 protein Shewmr4_1554 from Shewanella sp. (strain MR-4).